Here is a 628-residue protein sequence, read N- to C-terminus: Beta-galactosidase large subunit (628 aa).

Glutamate 468 serves as the catalytic Proton donor. Residue glutamate 536 is the Nucleophile of the active site.

This sequence belongs to the glycosyl hydrolase 2 family. As to quaternary structure, heterodimer of a large (LacL) and a small subunit (LacM).

The enzyme catalyses Hydrolysis of terminal non-reducing beta-D-galactose residues in beta-D-galactosides.. Functionally, component of a beta-galactosidase. The protein is Beta-galactosidase large subunit of Lactobacillus helveticus (Lactobacillus suntoryeus).